Here is a 166-residue protein sequence, read N- to C-terminus: Lipoprotein signal peptidase (166 aa).

Helical transmembrane passes span 10–30 (LIWLLLSALVIGLDQWSKAWV), 68–88 (WQLWFFTALAMGISGLLAFWL), and 94–114 (GHWRSALPYALVIGGAIGNVI). Active-site residues include Asp-124 and Asp-142. Residues 138-158 (FNIADSAIVGGAIGIAVFGLF) traverse the membrane as a helical segment.

Belongs to the peptidase A8 family.

Its subcellular location is the cell inner membrane. The catalysed reaction is Release of signal peptides from bacterial membrane prolipoproteins. Hydrolyzes -Xaa-Yaa-Zaa-|-(S,diacylglyceryl)Cys-, in which Xaa is hydrophobic (preferably Leu), and Yaa (Ala or Ser) and Zaa (Gly or Ala) have small, neutral side chains.. It functions in the pathway protein modification; lipoprotein biosynthesis (signal peptide cleavage). Its function is as follows. This protein specifically catalyzes the removal of signal peptides from prolipoproteins. This Xanthomonas oryzae pv. oryzae (strain MAFF 311018) protein is Lipoprotein signal peptidase.